Reading from the N-terminus, the 232-residue chain is Response regulator MprA (232 aa).

The Response regulatory domain occupies 4-118 (RILVVDDDRA…ELLARMRALL (115 aa)). At Asp48 the chain carries 4-aspartylphosphate. A DNA-binding region (ompR/PhoB-type) is located at residues 131 to 229 (SVAMTFSDLS…VRGVGYVLRE (99 aa)).

Phosphorylated and dephosphorylated by MprB.

It is found in the cytoplasm. Its function is as follows. Member of the two-component regulatory system MprB/MprA which contributes to maintaining a balance among several systems involved in stress resistance and is required for establishment and maintenance of persistent infection in the host. Functions as a transcriptional regulator that recognizes a 19-bp nucleotide motif comprizing two loosely conserved 8-bp direct DNA-binding motif repeats separated by a 3-bp spacer region. This chain is Response regulator MprA (mprA), found in Mycobacterium ulcerans (strain Agy99).